The following is a 473-amino-acid chain: Photosystem II CP43 reaction center protein (473 aa).

Residues 1 to 14 (MKTLYSLRRSYPVE) constitute a propeptide that is removed on maturation. The residue at position 15 (Thr15) is an N-acetylthreonine. Position 15 is a phosphothreonine (Thr15). The next 5 helical transmembrane spans lie at 69–93 (LFEVAHFVPEKPMYEQGLILLPHLA), 134–155 (LIGPETLEESFPFFGYVWKDRN), 178–200 (KALYFGGVYDTWAPGGGDVRKIT), 255–275 (KPFAWARRAFVWSGEAYLSYS), and 291–312 (WFNNTAYPSEFYGPTGPEASQA). Glu367 is a [CaMn4O5] cluster binding site. The helical transmembrane segment at 447 to 471 (RARAAAAGFEKGIDRDFEPVLSMTP) threads the bilayer.

Belongs to the PsbB/PsbC family. PsbC subfamily. PSII is composed of 1 copy each of membrane proteins PsbA, PsbB, PsbC, PsbD, PsbE, PsbF, PsbH, PsbI, PsbJ, PsbK, PsbL, PsbM, PsbT, PsbX, PsbY, PsbZ, Psb30/Ycf12, at least 3 peripheral proteins of the oxygen-evolving complex and a large number of cofactors. It forms dimeric complexes. Binds multiple chlorophylls and provides some of the ligands for the Ca-4Mn-5O cluster of the oxygen-evolving complex. It may also provide a ligand for a Cl- that is required for oxygen evolution. PSII binds additional chlorophylls, carotenoids and specific lipids. serves as cofactor.

It localises to the plastid. It is found in the chloroplast thylakoid membrane. Functionally, one of the components of the core complex of photosystem II (PSII). It binds chlorophyll and helps catalyze the primary light-induced photochemical processes of PSII. PSII is a light-driven water:plastoquinone oxidoreductase, using light energy to abstract electrons from H(2)O, generating O(2) and a proton gradient subsequently used for ATP formation. The protein is Photosystem II CP43 reaction center protein of Abies alba (Edeltanne).